A 184-amino-acid polypeptide reads, in one-letter code: MEGSGEHGETSKGPLSKGVSRGLCILDLIFRVIAVIGTLASAIAMGTTNQTMPFFTQFVQFKERYSDLPTLTFFVVANSIASAYLIISLPLSIVHIIRSRAKYSRLILIFFDVAMLALVTAAASAGAAIVYLAHNGNVSANWFAICQQFDSFCERISGSLIGSFAAMVVLILLILLSAVALARR.

Residues 1-22 lie on the Cytoplasmic side of the membrane; it reads MEGSGEHGETSKGPLSKGVSRG. The helical transmembrane segment at 23-43 threads the bilayer; it reads LCILDLIFRVIAVIGTLASAI. The Extracellular segment spans residues 44 to 72; that stretch reads AMGTTNQTMPFFTQFVQFKERYSDLPTLT. Asn-49 carries N-linked (GlcNAc...) asparagine glycosylation. The helical transmembrane segment at 73-93 threads the bilayer; it reads FFVVANSIASAYLIISLPLSI. The Cytoplasmic segment spans residues 94–105; it reads VHIIRSRAKYSR. Residues 106–126 form a helical membrane-spanning segment; it reads LILIFFDVAMLALVTAAASAG. The Extracellular portion of the chain corresponds to 127 to 159; the sequence is AAIVYLAHNGNVSANWFAICQQFDSFCERISGS. A glycan (N-linked (GlcNAc...) asparagine) is linked at Asn-137. The chain crosses the membrane as a helical span at residues 160–180; that stretch reads LIGSFAAMVVLILLILLSAVA. The Cytoplasmic segment spans residues 181-184; the sequence is LARR.

It belongs to the Casparian strip membrane proteins (CASP) family. In terms of assembly, homodimer and heterodimers.

The protein localises to the cell membrane. Its function is as follows. Regulates membrane-cell wall junctions and localized cell wall deposition. Required for establishment of the Casparian strip membrane domain (CSD) and the subsequent formation of Casparian strips, a cell wall modification of the root endodermis that determines an apoplastic barrier between the intraorganismal apoplasm and the extraorganismal apoplasm and prevents lateral diffusion. The chain is Casparian strip membrane protein 3 from Brachypodium distachyon (Purple false brome).